Here is a 142-residue protein sequence, read N- to C-terminus: Hemoglobin subunit zeta (142 aa).

An N-acetylserine modification is found at S2. The region spanning 2–142 (SLTRTERTII…VSGVLTEKYR (141 aa)) is the Globin domain. At T29 the chain carries Phosphothreonine. The residue at position 53 (S53) is a Phosphoserine. H59 lines the heme b pocket. Phosphoserine is present on residues S73 and S82. H88 provides a ligand contact to heme b.

It belongs to the globin family. Heterotetramer of two zeta chains and beta-type chains.

Functionally, the zeta chain is an alpha-type chain of mammalian embryonic hemoglobin. The chain is Hemoglobin subunit zeta (HBZ1) from Capra hircus (Goat).